A 615-amino-acid chain; its full sequence is Dihydroxy-acid dehydratase (615 aa).

Asp-81 lines the Mg(2+) pocket. Cys-122 is a [2Fe-2S] cluster binding site. Positions 123 and 124 each coordinate Mg(2+). The residue at position 124 (Lys-124) is an N6-carboxylysine. Cys-195 contributes to the [2Fe-2S] cluster binding site. Residue Glu-491 participates in Mg(2+) binding. The active-site Proton acceptor is the Ser-517.

This sequence belongs to the IlvD/Edd family. As to quaternary structure, homodimer. [2Fe-2S] cluster is required as a cofactor. Requires Mg(2+) as cofactor.

It carries out the reaction (2R)-2,3-dihydroxy-3-methylbutanoate = 3-methyl-2-oxobutanoate + H2O. The catalysed reaction is (2R,3R)-2,3-dihydroxy-3-methylpentanoate = (S)-3-methyl-2-oxopentanoate + H2O. Its pathway is amino-acid biosynthesis; L-isoleucine biosynthesis; L-isoleucine from 2-oxobutanoate: step 3/4. It participates in amino-acid biosynthesis; L-valine biosynthesis; L-valine from pyruvate: step 3/4. Its function is as follows. Functions in the biosynthesis of branched-chain amino acids. Catalyzes the dehydration of (2R,3R)-2,3-dihydroxy-3-methylpentanoate (2,3-dihydroxy-3-methylvalerate) into 2-oxo-3-methylpentanoate (2-oxo-3-methylvalerate) and of (2R)-2,3-dihydroxy-3-methylbutanoate (2,3-dihydroxyisovalerate) into 2-oxo-3-methylbutanoate (2-oxoisovalerate), the penultimate precursor to L-isoleucine and L-valine, respectively. This is Dihydroxy-acid dehydratase from Pseudoalteromonas atlantica (strain T6c / ATCC BAA-1087).